The chain runs to 213 residues: ATP synthase peripheral stalk subunit OSCP, mitochondrial (213 aa).

Residues 1 to 23 (MAAPAASGLSRQVRSFSTSVVRP) constitute a mitochondrion transit peptide. Positions 5–23 (AASGLSRQVRSFSTSVVRP) match the SIFI-degron motif. Residues lysine 54, lysine 60, lysine 70, and lysine 73 each carry the N6-acetyllysine modification. Lysine 90 carries the post-translational modification N6-succinyllysine. N6-acetyllysine; alternate occurs at positions 100, 158, and 162. N6-succinyllysine; alternate is present on residues lysine 100, lysine 158, and lysine 162. An N6-acetyllysine mark is found at lysine 172, lysine 176, and lysine 192. N6-succinyllysine is present on lysine 199.

Belongs to the ATPase delta chain family. In terms of assembly, component of the ATP synthase complex composed at least of ATP5F1A/subunit alpha, ATP5F1B/subunit beta, ATP5MC1/subunit c (homooctomer), MT-ATP6/subunit a, MT-ATP8/subunit 8, ATP5ME/subunit e, ATP5MF/subunit f, ATP5MG/subunit g, ATP5MK/subunit k, ATP5MJ/subunit j, ATP5F1C/subunit gamma, ATP5F1D/subunit delta, ATP5F1E/subunit epsilon, ATP5PF/subunit F6, ATP5PB/subunit b, ATP5PD/subunit d, ATP5PO/subunit OSCP. ATP synthase complex consists of a soluble F(1) head domain (subunits alpha(3) and beta(3)) - the catalytic core - and a membrane F(0) domain - the membrane proton channel (subunits c, a, 8, e, f, g, k and j). These two domains are linked by a central stalk (subunits gamma, delta, and epsilon) rotating inside the F1 region and a stationary peripheral stalk (subunits F6, b, d, and OSCP). Acetylation of Lys-70 and Lys-158 is observed in liver mitochondria from fasted mice but not from fed mice. In terms of processing, acetylation at Lys-162 decreases ATP production. Deacetylated by SIRT3. Post-translationally, in response to mitochondrial stress, the precursor protein is ubiquitinated by the SIFI complex in the cytoplasm before mitochondrial import, leading to its degradation. Within the SIFI complex, UBR4 initiates ubiquitin chain that are further elongated or branched by KCMF1.

Its subcellular location is the mitochondrion. It localises to the mitochondrion inner membrane. In terms of biological role, subunit OSCP, of the mitochondrial membrane ATP synthase complex (F(1)F(0) ATP synthase or Complex V) that produces ATP from ADP in the presence of a proton gradient across the membrane which is generated by electron transport complexes of the respiratory chain. ATP synthase complex consist of a soluble F(1) head domain - the catalytic core - and a membrane F(1) domain - the membrane proton channel. These two domains are linked by a central stalk rotating inside the F(1) region and a stationary peripheral stalk. During catalysis, ATP synthesis in the catalytic domain of F(1) is coupled via a rotary mechanism of the central stalk subunits to proton translocation. In vivo, can only synthesize ATP although its ATP hydrolase activity can be activated artificially in vitro. Part of the complex F(0) domain. Part of the complex F(0) domain and the peripheric stalk, which acts as a stator to hold the catalytic alpha(3)beta(3) subcomplex and subunit a/ATP6 static relative to the rotary elements. This chain is ATP synthase peripheral stalk subunit OSCP, mitochondrial, found in Mus musculus (Mouse).